The sequence spans 180 residues: Trichosurin (180 aa).

Residues 1 to 15 (MKLLLLSMGLALVCG) form the signal peptide. N-linked (GlcNAc...) asparagine glycans are attached at residues asparagine 67 and asparagine 148. A disulfide bridge links cysteine 87 with cysteine 180.

Belongs to the calycin superfamily. Lipocalin family. In terms of assembly, homodimer. Milk.

It localises to the secreted. The polypeptide is Trichosurin (Trichosurus vulpecula (Brush-tailed possum)).